The primary structure comprises 586 residues: Arginine--tRNA ligase (586 aa).

The short motif at 133 to 143 (ANPTGPLNIVS) is the 'HIGH' region element.

It belongs to the class-I aminoacyl-tRNA synthetase family. As to quaternary structure, monomer.

It is found in the cytoplasm. The enzyme catalyses tRNA(Arg) + L-arginine + ATP = L-arginyl-tRNA(Arg) + AMP + diphosphate. This chain is Arginine--tRNA ligase, found in Leptospira interrogans serogroup Icterohaemorrhagiae serovar copenhageni (strain Fiocruz L1-130).